The chain runs to 387 residues: Probable tRNA sulfurtransferase (387 aa).

Residues 67 to 167 enclose the THUMP domain; it reads SLLKNLFTRL…KEHFLIISES (101 aa). Residues 185–186, 210–211, R269, G287, and Q296 each bind ATP; these read LL and TF.

The protein belongs to the ThiI family.

The protein resides in the cytoplasm. It carries out the reaction [ThiI sulfur-carrier protein]-S-sulfanyl-L-cysteine + a uridine in tRNA + 2 reduced [2Fe-2S]-[ferredoxin] + ATP + H(+) = [ThiI sulfur-carrier protein]-L-cysteine + a 4-thiouridine in tRNA + 2 oxidized [2Fe-2S]-[ferredoxin] + AMP + diphosphate. It catalyses the reaction [ThiS sulfur-carrier protein]-C-terminal Gly-Gly-AMP + S-sulfanyl-L-cysteinyl-[cysteine desulfurase] + AH2 = [ThiS sulfur-carrier protein]-C-terminal-Gly-aminoethanethioate + L-cysteinyl-[cysteine desulfurase] + A + AMP + 2 H(+). The protein operates within cofactor biosynthesis; thiamine diphosphate biosynthesis. In terms of biological role, catalyzes the ATP-dependent transfer of a sulfur to tRNA to produce 4-thiouridine in position 8 of tRNAs, which functions as a near-UV photosensor. Also catalyzes the transfer of sulfur to the sulfur carrier protein ThiS, forming ThiS-thiocarboxylate. This is a step in the synthesis of thiazole, in the thiamine biosynthesis pathway. The sulfur is donated as persulfide by IscS. In Mycoplasma pneumoniae (strain ATCC 29342 / M129 / Subtype 1) (Mycoplasmoides pneumoniae), this protein is Probable tRNA sulfurtransferase.